The sequence spans 89 residues: Long neurotoxin homolog NTL2 (89 aa).

An N-terminal signal peptide occupies residues 1 to 21; the sequence is MKTLLLSLVVVIIVCLDLGYT. Intrachain disulfides connect C24-C45, C27-C32, C38-C66, C70-C81, and C82-C87. Positions 54 to 56 match the Cell attachment site motif; the sequence is RGD.

Belongs to the three-finger toxin family. Ancestral subfamily. Orphan group V sub-subfamily. Expressed by the venom gland.

The protein resides in the secreted. Functionally, exhibits M2 muscarinic acetylcholine receptor (CHRM2)-blocking activity, but has a weak binding activity toward nicotinic AChR. Moreover, it inhibits collagen-induced platelet aggregation. The polypeptide is Long neurotoxin homolog NTL2 (Bungarus multicinctus (Many-banded krait)).